The sequence spans 367 residues: Glycolate oxidase 1 (367 aa).

M1 is modified (N-acetylmethionine). Y24 contacts glyoxylate. FMN contacts are provided by residues 77–79 (PTA), S106, 127–129 (QLY), and T155. Y129 provides a ligand contact to glyoxylate. Glyoxylate is bound at residue R164. FMN is bound by residues K230 and S252. The glyoxylate site is built by H254 and R257. H254 functions as the Proton acceptor in the catalytic mechanism. Residues 285-289 (DGGVR) and 308-309 (GR) each bind FMN.

The protein belongs to the FMN-dependent alpha-hydroxy acid dehydrogenase family. Homotetramer. Requires FMN as cofactor.

It localises to the peroxisome. It catalyses the reaction glycolate + O2 = glyoxylate + H2O2. It functions in the pathway photosynthesis; photorespiration; glycine from 2-phosphoglycolate: step 2/3. Catalyzes the oxidation of glycolate to glyoxylate, with a reduction of O2 to H2O2. Is a key enzyme in photorespiration in green plants. The sequence is that of Glycolate oxidase 1 (GLO1) from Arabidopsis thaliana (Mouse-ear cress).